The primary structure comprises 229 residues: Flagellar L-ring protein (229 aa).

The first 23 residues, 1-23 (MNPLTRVALAVAAFAALVLALSA), serve as a signal peptide directing secretion. Cys-24 is lipidated: N-palmitoyl cysteine. Cys-24 carries the S-diacylglycerol cysteine lipid modification.

Belongs to the FlgH family. In terms of assembly, the basal body constitutes a major portion of the flagellar organelle and consists of four rings (L,P,S, and M) mounted on a central rod.

It localises to the cell outer membrane. The protein resides in the bacterial flagellum basal body. Assembles around the rod to form the L-ring and probably protects the motor/basal body from shearing forces during rotation. The protein is Flagellar L-ring protein of Anaeromyxobacter sp. (strain K).